Reading from the N-terminus, the 500-residue chain is MKVTSGPAFALCSLLLLLLLLLQVPDSLSLVPQPRGHLCRTRPTDLVFVVDSSRSVRPVEFEKVKVFLSQVIESLDVGPNATRVGLVNYASTVKPEFPLRAHGSKASLLQAVRRIQPLSTGTMTGLALQFAITKALSDAEGGRARSPDISKVVIVVTDGRPQDSVRDVSERARASGIELFAIGVGRVDKATLRQIASEPQDEHVDYVESYNVIEKLAKKFQEAFCVVSDLCATGDHDCEQLCVSSPGSYTCACHEGFTLNSDGKTCNVCRGGGSGSATDLVFLIDGSKSVRPENFELVKKFINQIVDTLDVSDRLAQVGLVQYSSSIRQEFPLGRFHTKKDIKAAVRNMSYMEKGTMTGAALKYLIDNSFTVSSGARPGAQKVGIVFTDGRSQDYINDAARKAKDLGFKMFAVGVGNAVEEELREIASEPVADHYFYTADFKTINQIGKKLQKQICVEEDPCACESILKFEAKVEGLLQALTRKLEAVSGRLAVLENRII.

The N-terminal stretch at 1–29 (MKVTSGPAFALCSLLLLLLLLLQVPDSLS) is a signal peptide. The region spanning 30 to 226 (LVPQPRGHLC…AKKFQEAFCV (197 aa)) is the VWFA 1 domain. Residue N80 is glycosylated (N-linked (GlcNAc...) asparagine). Residues 227-267 (VSDLCATGDHDCEQLCVSSPGSYTCACHEGFTLNSDGKTCN) enclose the EGF-like domain. 3 disulfide bridges follow: C231-C242, C238-C251, and C253-C266. Residues 268 to 457 (VCRGGGSGSA…GKKLQKQICV (190 aa)) form the VWFA 2 domain. Residue N348 is glycosylated (N-linked (GlcNAc...) asparagine). A coiled-coil region spans residues 471 to 499 (EAKVEGLLQALTRKLEAVSGRLAVLENRI).

As to quaternary structure, homotrimer. Part of a complex composed of MATN1 (via VWFA1 domain), type 2 collagens and type 6 collagens. Forms a complex (via covalent bonds) with ACAN; the interaction increases in abundance with increasing age of the organism via an increase in occupancy of MATN1 binding sites. Interacts with COMP. In terms of processing, N-glycosylated; reduces binding affinity for type 2 collagens. Expressed in femoral head articular cartilage. Expressed in the trachea and extraskeletal tissue around the eye.

The protein localises to the secreted. Its subcellular location is the extracellular space. The protein resides in the extracellular matrix. Its function is as follows. A major component of the extracellular matrix of non-articular cartilage. Binds to type 2 collagens and forms long concatenated protein networks as part of the extracellular matrix. Required for the network-like organization and bundling of collagen fibrils surrounding chondrocytes in the zones of maturation and hypertrophy. Required for mechanotransduction and adaption to mechanical loading in cartilage chondrocytes, resulting in an increase in expression of the extracellular matrix components ACAN and COL2A1. Acts as a moderator of angiogenesis in response to injury. The chain is Matrilin-1 from Mus musculus (Mouse).